Here is a 251-residue protein sequence, read N- to C-terminus: Flap endonuclease Xni (251 aa).

A Mg(2+)-binding site is contributed by Asp-104. The 5'-3' exonuclease domain maps to Val-160–Leu-249. Leu-171, Ala-172, Pro-180, Val-182, and Ile-185 together coordinate K(+). The segment at Gly-184–Ser-189 is interaction with DNA.

This sequence belongs to the Xni family. Mg(2+) serves as cofactor. The cofactor is K(+).

Has flap endonuclease activity. During DNA replication, flap endonucleases cleave the 5'-overhanging flap structure that is generated by displacement synthesis when DNA polymerase encounters the 5'-end of a downstream Okazaki fragment. This chain is Flap endonuclease Xni, found in Salmonella choleraesuis (strain SC-B67).